A 425-amino-acid chain; its full sequence is Serine--tRNA ligase (425 aa).

233–235 is a binding site for L-serine; it reads TAE. 264–266 contacts ATP; it reads RAE. Glutamate 287 lines the L-serine pocket. 351–354 is an ATP binding site; the sequence is EISS. Position 387 (serine 387) interacts with L-serine.

This sequence belongs to the class-II aminoacyl-tRNA synthetase family. Type-1 seryl-tRNA synthetase subfamily. As to quaternary structure, homodimer. The tRNA molecule binds across the dimer.

It localises to the cytoplasm. The catalysed reaction is tRNA(Ser) + L-serine + ATP = L-seryl-tRNA(Ser) + AMP + diphosphate + H(+). The enzyme catalyses tRNA(Sec) + L-serine + ATP = L-seryl-tRNA(Sec) + AMP + diphosphate + H(+). The protein operates within aminoacyl-tRNA biosynthesis; selenocysteinyl-tRNA(Sec) biosynthesis; L-seryl-tRNA(Sec) from L-serine and tRNA(Sec): step 1/1. In terms of biological role, catalyzes the attachment of serine to tRNA(Ser). Is also able to aminoacylate tRNA(Sec) with serine, to form the misacylated tRNA L-seryl-tRNA(Sec), which will be further converted into selenocysteinyl-tRNA(Sec). The polypeptide is Serine--tRNA ligase (Clostridium botulinum (strain Eklund 17B / Type B)).